The following is a 211-amino-acid chain: Imidazole glycerol phosphate synthase subunit HisH (211 aa).

The 208-residue stretch at 4–211 (RVVILDYGSG…QLLANWVATL (208 aa)) folds into the Glutamine amidotransferase type-1 domain. The Nucleophile role is filled by C82. Residues H192 and E194 contribute to the active site.

As to quaternary structure, heterodimer of HisH and HisF.

The protein localises to the cytoplasm. The catalysed reaction is 5-[(5-phospho-1-deoxy-D-ribulos-1-ylimino)methylamino]-1-(5-phospho-beta-D-ribosyl)imidazole-4-carboxamide + L-glutamine = D-erythro-1-(imidazol-4-yl)glycerol 3-phosphate + 5-amino-1-(5-phospho-beta-D-ribosyl)imidazole-4-carboxamide + L-glutamate + H(+). The enzyme catalyses L-glutamine + H2O = L-glutamate + NH4(+). It participates in amino-acid biosynthesis; L-histidine biosynthesis; L-histidine from 5-phospho-alpha-D-ribose 1-diphosphate: step 5/9. Its function is as follows. IGPS catalyzes the conversion of PRFAR and glutamine to IGP, AICAR and glutamate. The HisH subunit catalyzes the hydrolysis of glutamine to glutamate and ammonia as part of the synthesis of IGP and AICAR. The resulting ammonia molecule is channeled to the active site of HisF. The chain is Imidazole glycerol phosphate synthase subunit HisH from Thermobifida fusca (strain YX).